A 1057-amino-acid polypeptide reads, in one-letter code: Glycine dehydrogenase (decarboxylating), mitochondrial (1057 aa).

The N-terminal 86 residues, 1–86, are a transit peptide targeting the mitochondrion; sequence MERARRLANR…GVGYPSQSRS (86 aa). A compositionally biased stretch (basic and acidic residues) spans 18–27; the sequence is SEAKQNRKTE. The tract at residues 18–47 is disordered; the sequence is SEAKQNRKTESTSTTTTTPLPFSLSGSSSR. Residues 28–47 show a composition bias toward low complexity; that stretch reads STSTTTTTPLPFSLSGSSSR. Lys-792 carries the N6-(pyridoxal phosphate)lysine modification.

It belongs to the GcvP family. Homodimer. The glycine cleavage system is composed of four proteins: P, T, L and H. Pyridoxal 5'-phosphate is required as a cofactor. As to expression, highly expressed in leaves. Detected in roots and embryos.

It is found in the mitochondrion. It carries out the reaction N(6)-[(R)-lipoyl]-L-lysyl-[glycine-cleavage complex H protein] + glycine + H(+) = N(6)-[(R)-S(8)-aminomethyldihydrolipoyl]-L-lysyl-[glycine-cleavage complex H protein] + CO2. Functionally, the glycine cleavage system catalyzes the degradation of glycine. The P protein binds the alpha-amino group of glycine through its pyridoxal phosphate cofactor; CO(2) is released and the remaining methylamine moiety is then transferred to the lipoamide cofactor of the H protein. The sequence is that of Glycine dehydrogenase (decarboxylating), mitochondrial (GDCSP) from Pisum sativum (Garden pea).